The chain runs to 269 residues: Formamidopyrimidine-DNA glycosylase (269 aa).

Catalysis depends on Pro2, which acts as the Schiff-base intermediate with DNA. Glu3 serves as the catalytic Proton donor. Residue Lys57 is the Proton donor; for beta-elimination activity of the active site. Residues His90, Arg109, and Lys150 each contribute to the DNA site. The FPG-type zinc-finger motif lies at 235–269 (QVYGRKGEPCRVCGTPIVATKHAQRATFYCRHCQK). Arg259 functions as the Proton donor; for delta-elimination activity in the catalytic mechanism.

It belongs to the FPG family. As to quaternary structure, monomer. Requires Zn(2+) as cofactor.

The catalysed reaction is Hydrolysis of DNA containing ring-opened 7-methylguanine residues, releasing 2,6-diamino-4-hydroxy-5-(N-methyl)formamidopyrimidine.. It catalyses the reaction 2'-deoxyribonucleotide-(2'-deoxyribose 5'-phosphate)-2'-deoxyribonucleotide-DNA = a 3'-end 2'-deoxyribonucleotide-(2,3-dehydro-2,3-deoxyribose 5'-phosphate)-DNA + a 5'-end 5'-phospho-2'-deoxyribonucleoside-DNA + H(+). Involved in base excision repair of DNA damaged by oxidation or by mutagenic agents. Acts as a DNA glycosylase that recognizes and removes damaged bases. Has a preference for oxidized purines, such as 7,8-dihydro-8-oxoguanine (8-oxoG). Has AP (apurinic/apyrimidinic) lyase activity and introduces nicks in the DNA strand. Cleaves the DNA backbone by beta-delta elimination to generate a single-strand break at the site of the removed base with both 3'- and 5'-phosphates. This Salmonella agona (strain SL483) protein is Formamidopyrimidine-DNA glycosylase.